The sequence spans 123 residues: Double-stranded DNA deaminase immunity protein (123 aa).

The toxic domain forms a 1:1 complex with the DddI immunity protein. This protein blocks the active site of the toxin.

Its function is as follows. Immunity protein component of a toxin-immunity protein module, which functions as a cellular contact-dependent growth inhibition (CDI) system. CDI modules allow bacteria to communicate with and inhibit the growth of closely related neighboring bacteria in a contact-dependent fashion. Bacteria that have this module inhibit or kill bacteria without it, giving them a growth advantage. Specifically inhibits the toxic activity of cognate toxin DddA (C-terminal 163 residue fragment) upon expression in E.coli. This is Double-stranded DNA deaminase immunity protein from Burkholderia cenocepacia (strain H111).